A 66-amino-acid chain; its full sequence is Small ribosomal subunit protein eS27 (66 aa).

Residues Cys21, Cys24, Cys40, and Cys43 each contribute to the Zn(2+) site. The C4-type zinc finger occupies 21–43; sequence CPVCGNEQVIFSHATFPARCLVC.

The protein belongs to the eukaryotic ribosomal protein eS27 family. In terms of assembly, part of the 30S ribosomal subunit. Requires Zn(2+) as cofactor.

This is Small ribosomal subunit protein eS27 from Hyperthermus butylicus (strain DSM 5456 / JCM 9403 / PLM1-5).